Consider the following 297-residue polypeptide: UDP-N-acetylenolpyruvoylglucosamine reductase (297 aa).

In terms of domain architecture, FAD-binding PCMH-type spans 18–184 (QVGGPAEWYL…LSARLRLAPG (167 aa)). The active site involves R163. Residue S214 is the Proton donor of the active site. E285 is an active-site residue.

The cofactor is FAD.

The protein resides in the cytoplasm. The enzyme catalyses UDP-N-acetyl-alpha-D-muramate + NADP(+) = UDP-N-acetyl-3-O-(1-carboxyvinyl)-alpha-D-glucosamine + NADPH + H(+). It participates in cell wall biogenesis; peptidoglycan biosynthesis. Its function is as follows. Cell wall formation. In Gloeobacter violaceus (strain ATCC 29082 / PCC 7421), this protein is UDP-N-acetylenolpyruvoylglucosamine reductase.